We begin with the raw amino-acid sequence, 140 residues long: MSSEYQIGHEGEFTYRGHTLDELQEMELDEVAELLPARQRRTIKRGLSVEQEKLLDEAREAGEEETANNPIRTHLRDMPILPRFVGLTFAVYNGQSFERVEVEPEMIGHYLGEFQLTRTSVEHGQAGIGATRSSKFVPLK.

The protein belongs to the universal ribosomal protein uS19 family.

In terms of biological role, protein S19 forms a complex with S13 that binds strongly to the 16S ribosomal RNA. The sequence is that of Small ribosomal subunit protein uS19 from Natronomonas pharaonis (strain ATCC 35678 / DSM 2160 / CIP 103997 / JCM 8858 / NBRC 14720 / NCIMB 2260 / Gabara) (Halobacterium pharaonis).